A 393-amino-acid polypeptide reads, in one-letter code: S-adenosylmethionine synthase (393 aa).

E9 lines the Mg(2+) pocket. H15 serves as a coordination point for ATP. Residue E43 coordinates K(+). L-methionine-binding residues include E56 and Q99. ATP is bound by residues 167-169 (DGK), 235-238 (SGRF), D246, 252-253 (RK), A269, K273, and K277. D246 lines the L-methionine pocket. K277 is a binding site for L-methionine.

The protein belongs to the AdoMet synthase family. Homotetramer. Mn(2+) serves as cofactor. Requires Mg(2+) as cofactor. It depends on Co(2+) as a cofactor. K(+) is required as a cofactor.

It is found in the cytoplasm. It catalyses the reaction L-methionine + ATP + H2O = S-adenosyl-L-methionine + phosphate + diphosphate. Its pathway is amino-acid biosynthesis; S-adenosyl-L-methionine biosynthesis; S-adenosyl-L-methionine from L-methionine: step 1/1. Catalyzes the formation of S-adenosylmethionine from methionine and ATP. The reaction comprises two steps that are both catalyzed by the same enzyme: formation of S-adenosylmethionine (AdoMet) and triphosphate, and subsequent hydrolysis of the triphosphate. The protein is S-adenosylmethionine synthase (SAMS) of Litchi chinensis (Lychee).